The following is a 398-amino-acid chain: Bifunctional enzyme IspD/IspF (398 aa).

Residues 1 to 234 (MTNSPRTAAI…SRLMAALGDI (234 aa)) form a 2-C-methyl-D-erythritol 4-phosphate cytidylyltransferase region. The interval 235–398 (RTGTGYDVHA…LPWGADGLAG (164 aa)) is 2-C-methyl-D-erythritol 2,4-cyclodiphosphate synthase. A divalent metal cation is bound by residues Asp241 and His243. 4-CDP-2-C-methyl-D-erythritol 2-phosphate contacts are provided by residues 241–243 (DVH) and 267–268 (HS). A divalent metal cation is bound at residue His275. 4-CDP-2-C-methyl-D-erythritol 2-phosphate is bound by residues 289 to 291 (DIG), 365 to 368 (TTSE), Phe372, and Arg375.

This sequence in the N-terminal section; belongs to the IspD/TarI cytidylyltransferase family. IspD subfamily. The protein in the C-terminal section; belongs to the IspF family. A divalent metal cation serves as cofactor.

It carries out the reaction 2-C-methyl-D-erythritol 4-phosphate + CTP + H(+) = 4-CDP-2-C-methyl-D-erythritol + diphosphate. The catalysed reaction is 4-CDP-2-C-methyl-D-erythritol 2-phosphate = 2-C-methyl-D-erythritol 2,4-cyclic diphosphate + CMP. Its pathway is isoprenoid biosynthesis; isopentenyl diphosphate biosynthesis via DXP pathway; isopentenyl diphosphate from 1-deoxy-D-xylulose 5-phosphate: step 2/6. It functions in the pathway isoprenoid biosynthesis; isopentenyl diphosphate biosynthesis via DXP pathway; isopentenyl diphosphate from 1-deoxy-D-xylulose 5-phosphate: step 4/6. Functionally, bifunctional enzyme that catalyzes the formation of 4-diphosphocytidyl-2-C-methyl-D-erythritol from CTP and 2-C-methyl-D-erythritol 4-phosphate (MEP) (IspD), and catalyzes the conversion of 4-diphosphocytidyl-2-C-methyl-D-erythritol 2-phosphate (CDP-ME2P) to 2-C-methyl-D-erythritol 2,4-cyclodiphosphate (ME-CPP) with a corresponding release of cytidine 5-monophosphate (CMP) (IspF). The sequence is that of Bifunctional enzyme IspD/IspF from Rhodopseudomonas palustris (strain ATCC BAA-98 / CGA009).